We begin with the raw amino-acid sequence, 112 residues long: T cell receptor alpha variable 21 (112 aa).

The first 19 residues, 1–19, serve as a signal peptide directing secretion; that stretch reads METLLGLLILWLQLQWVSS. Positions 21–112 constitute an Ig-like domain; sequence QEVTQIPAAL…DSATYLCAVR (92 aa). Residues asparagine 41 and asparagine 82 are each glycosylated (N-linked (GlcNAc...) asparagine). An intrachain disulfide couples cysteine 42 to cysteine 109.

In terms of assembly, alpha-beta TR is a heterodimer composed of an alpha and beta chain; disulfide-linked. The alpha-beta TR is associated with the transmembrane signaling CD3 coreceptor proteins to form the TR-CD3 (TcR or TCR). The assembly of alpha-beta TR heterodimers with CD3 occurs in the endoplasmic reticulum where a single alpha-beta TR heterodimer associates with one CD3D-CD3E heterodimer, one CD3G-CD3E heterodimer and one CD247 homodimer forming a stable octameric structure. CD3D-CD3E and CD3G-CD3E heterodimers preferentially associate with TR alpha and TR beta chains, respectively. The association of the CD247 homodimer is the last step of TcR assembly in the endoplasmic reticulum and is required for transport to the cell surface.

The protein resides in the cell membrane. In terms of biological role, v region of the variable domain of T cell receptor (TR) alpha chain that participates in the antigen recognition. Alpha-beta T cell receptors are antigen specific receptors which are essential to the immune response and are present on the cell surface of T lymphocytes. Recognize peptide-major histocompatibility (MH) (pMH) complexes that are displayed by antigen presenting cells (APC), a prerequisite for efficient T cell adaptive immunity against pathogens. Binding of alpha-beta TR to pMH complex initiates TR-CD3 clustering on the cell surface and intracellular activation of LCK that phosphorylates the ITAM motifs of CD3G, CD3D, CD3E and CD247 enabling the recruitment of ZAP70. In turn ZAP70 phosphorylates LAT, which recruits numerous signaling molecules to form the LAT signalosome. The LAT signalosome propagates signal branching to three major signaling pathways, the calcium, the mitogen-activated protein kinase (MAPK) kinase and the nuclear factor NF-kappa-B (NF-kB) pathways, leading to the mobilization of transcription factors that are critical for gene expression and essential for T cell growth and differentiation. The T cell repertoire is generated in the thymus, by V-(D)-J rearrangement. This repertoire is then shaped by intrathymic selection events to generate a peripheral T cell pool of self-MH restricted, non-autoaggressive T cells. Post-thymic interaction of alpha-beta TR with the pMH complexes shapes TR structural and functional avidity. This is T cell receptor alpha variable 21 from Homo sapiens (Human).